The sequence spans 123 residues: Fluoride-specific ion channel FluC 2 (123 aa).

Helical transmembrane passes span 30–50 (FPLP…FVAG), 68–88 (VGFI…VLLL), and 93–113 (WPLA…AVWV). Residues Gly72 and Thr75 each coordinate Na(+).

It belongs to the fluoride channel Fluc/FEX (TC 1.A.43) family.

Its subcellular location is the cell membrane. The enzyme catalyses fluoride(in) = fluoride(out). Na(+) is not transported, but it plays an essential structural role and its presence is essential for fluoride channel function. Fluoride-specific ion channel. Important for reducing fluoride concentration in the cell, thus reducing its toxicity. The chain is Fluoride-specific ion channel FluC 2 from Symbiobacterium thermophilum (strain DSM 24528 / JCM 14929 / IAM 14863 / T).